The primary structure comprises 85 residues: Small ribosomal subunit protein bS16 (85 aa).

Belongs to the bacterial ribosomal protein bS16 family.

The protein is Small ribosomal subunit protein bS16 of Neorickettsia sennetsu (strain ATCC VR-367 / Miyayama) (Ehrlichia sennetsu).